The sequence spans 1138 residues: Eukaryotic translation initiation factor 3 subunit A (1138 aa).

A PCI domain is found at 319–502 (LQRMAAHVLL…NSIYFGTDLT (184 aa)). 2 disordered regions span residues 590 to 633 (NNAR…NEIQ) and 817 to 1138 (ERFR…VKRR). Composition is skewed to basic and acidic residues over residues 817–903 (ERFR…RVER), 923–967 (DRNE…KEND), 1003–1049 (GRDD…DQPQ), and 1058–1078 (DSPRQNDRDNRRTTGERRDVR). Gly residues predominate over residues 1082–1100 (PKEGGGGVSGGGAGGGGGN). The segment covering 1107–1128 (PREEKAPPKREQAQDKENKAGD) has biased composition (basic and acidic residues).

This sequence belongs to the eIF-3 subunit A family. Component of the eukaryotic translation initiation factor 3 (eIF-3) complex. The eIF-3 complex interacts with pix.

Its subcellular location is the cytoplasm. Its function is as follows. RNA-binding component of the eukaryotic translation initiation factor 3 (eIF-3) complex, which is involved in protein synthesis of a specialized repertoire of mRNAs and, together with other initiation factors, stimulates binding of mRNA and methionyl-tRNAi to the 40S ribosome. The eIF-3 complex specifically targets and initiates translation of a subset of mRNAs involved in cell proliferation. The chain is Eukaryotic translation initiation factor 3 subunit A from Drosophila virilis (Fruit fly).